The sequence spans 256 residues: MTPGIRPLVAGNWKMNGTSASLNELRMIGNGFMSGLDAETEALVCVPATLLSHAAEILSRTPVHAGGEDCHTKESGAYTGCISAEMLKDAGASHVIVGHSECREQRGEDDATVQAKAAAAWRAGLVAIICIGETQQQREAGATLEVLSRQVAGSVPPSATPSNTVIAYEPVWAIGTGLTPTAADVAEAHAHIRERLSEKLGASAAKTRILYGGSVKPSNAVELLGVRNVDGALVGGASLKAADFLGIAEAYRSISG.

A substrate-binding site is contributed by 12-14; sequence NWK. Residue His99 is the Electrophile of the active site. Residue Glu169 is the Proton acceptor of the active site. Substrate contacts are provided by residues Gly175, Ser214, and 235 to 236; that span reads GG.

The protein belongs to the triosephosphate isomerase family. In terms of assembly, homodimer.

Its subcellular location is the cytoplasm. It carries out the reaction D-glyceraldehyde 3-phosphate = dihydroxyacetone phosphate. The protein operates within carbohydrate biosynthesis; gluconeogenesis. It participates in carbohydrate degradation; glycolysis; D-glyceraldehyde 3-phosphate from glycerone phosphate: step 1/1. In terms of biological role, involved in the gluconeogenesis. Catalyzes stereospecifically the conversion of dihydroxyacetone phosphate (DHAP) to D-glyceraldehyde-3-phosphate (G3P). The chain is Triosephosphate isomerase from Mesorhizobium japonicum (strain LMG 29417 / CECT 9101 / MAFF 303099) (Mesorhizobium loti (strain MAFF 303099)).